The sequence spans 275 residues: NH(3)-dependent NAD(+) synthetase (275 aa).

47 to 54 (GISGGQDS) serves as a coordination point for ATP. Residue D53 participates in Mg(2+) binding. R141 contributes to the deamido-NAD(+) binding site. T161 contributes to the ATP binding site. E166 is a Mg(2+) binding site. Deamido-NAD(+)-binding residues include K174 and D181. ATP is bound by residues K190 and T212. Deamido-NAD(+) is bound at residue 261 to 262 (HK).

It belongs to the NAD synthetase family. As to quaternary structure, homodimer.

The enzyme catalyses deamido-NAD(+) + NH4(+) + ATP = AMP + diphosphate + NAD(+) + H(+). It participates in cofactor biosynthesis; NAD(+) biosynthesis; NAD(+) from deamido-NAD(+) (ammonia route): step 1/1. Functionally, catalyzes the ATP-dependent amidation of deamido-NAD to form NAD. Uses ammonia as a nitrogen source. In Enterococcus faecalis (strain ATCC 700802 / V583), this protein is NH(3)-dependent NAD(+) synthetase.